The primary structure comprises 725 residues: MGTIAMASINTTSTSGGSAAPIQMSGKANAATPKLNSEVEMGSLPGDAQTQEDDIMQVARVGDVPAMEKLFESGEYDATYHDDEGITPLHWAAINNQYAMCKFLIEHGAEINRKGGESIATPLQWAAQRCHYYTVNLLLQHGADPLVTDAQGYNTLHISTFNGNVLLLVLLLHQGIPVDVIDTFGHTALMWAAYKGFPQCVDLFLRWGASVHATDEQGFTALHWALVKGSPGCILKLIEYGADRFAKTQTGKTPSVTAKELNTEVAWHRALTECGFDEDGHPAVPPWPGASYFLKDKRSFVTRFLFFWPFVLVWAMLVAMSSAPVYIGVPLGIAAVYAIQWVAQQVLEYAPSDMRHFHKTPWLTGIFAATLFWTGVNWLTTVLFATTLGAPEGKGHGILNFLFALFFGFTVYFYIASMRYDPGFVPKMNGIAEQKAVIDELLAQWKYDETNFCVTCMIQTPLRSKHCRRCQRCVAKHDHHCPWVYNCVGINNHRHFFFYLISLTMGIVSYDFLLYYYFDTVSKNASETCNVLSPTLCKYINADSYTSILAIWITMQLLWVTMLLFTQFIQVARAMTTYENMFGIRDGTNITALTSTGAPLDPNHPSLSATGPAAAHSHKHKGGMLKSLSRTLGVDPFIETITGRGAVSGKNKRKKKNPYSKGCITNCKDFWCDPAPIFGQRENGSAVLGGERVDYSAMYESPSLMTITGRRDRGGYEAVGTEDVV.

Residues 1-303 (MGTIAMASIN…LKDKRSFVTR (303 aa)) lie on the Cytoplasmic side of the membrane. ANK repeat units follow at residues 84-113 (EGIT…EINR), 118-147 (SIAT…DPLV), 151-180 (QGYN…PVDV), 184-213 (FGHT…SVHA), and 217-246 (QGFT…DRFA). Residues 304-324 (FLFFWPFVLVWAMLVAMSSAP) form a helical membrane-spanning segment. At 325–326 (VY) the chain is on the lumenal side. A helical transmembrane segment spans residues 327–347 (IGVPLGIAAVYAIQWVAQQVL). Residues 348 to 364 (EYAPSDMRHFHKTPWLT) are Cytoplasmic-facing. A helical membrane pass occupies residues 365–385 (GIFAATLFWTGVNWLTTVLFA). Residues 386–397 (TTLGAPEGKGHG) are Lumenal-facing. The chain crosses the membrane as a helical span at residues 398–418 (ILNFLFALFFGFTVYFYIASM). Over 419–495 (RYDPGFVPKM…NCVGINNHRH (77 aa)) the chain is Cytoplasmic. The 51-residue stretch at 451 to 501 (NFCVTCMIQTPLRSKHCRRCQRCVAKHDHHCPWVYNCVGINNHRHFFFYLI) folds into the DHHC domain. The S-palmitoyl cysteine intermediate role is filled by cysteine 481. Residues 496–516 (FFFYLISLTMGIVSYDFLLYY) traverse the membrane as a helical segment. Topologically, residues 517 to 547 (YFDTVSKNASETCNVLSPTLCKYINADSYTS) are lumenal. The chain crosses the membrane as a helical span at residues 548–568 (ILAIWITMQLLWVTMLLFTQF). At 569–725 (IQVARAMTTY…YEAVGTEDVV (157 aa)) the chain is on the cytoplasmic side.

This sequence belongs to the DHHC palmitoyltransferase family. AKR/ZDHHC17 subfamily.

Its subcellular location is the early endosome membrane. It localises to the golgi apparatus membrane. It catalyses the reaction L-cysteinyl-[protein] + hexadecanoyl-CoA = S-hexadecanoyl-L-cysteinyl-[protein] + CoA. Palmitoyltransferase specific for casein kinase 1. This Gibberella zeae (strain ATCC MYA-4620 / CBS 123657 / FGSC 9075 / NRRL 31084 / PH-1) (Wheat head blight fungus) protein is Palmitoyltransferase AKR1 (AKR1).